A 910-amino-acid chain; its full sequence is Anoctamin-6 (910 aa).

At 1–300 the chain is on the cytoplasmic side; it reads MKKMSRNVLL…YGEKIGIYFA (300 aa). A helical transmembrane segment spans residues 301 to 321; that stretch reads WLGYYTQMLLLAAVVGVACFL. At 322-375 the chain is on the extracellular side; it reads YGYLNQDNCTWSKEVCHPDIGGKIIMCPQCDRLCPFWKLNITCESSKKLCIFDS. Asparagine 329 is a glycosylation site (N-linked (GlcNAc...) asparagine). 5 disulfides stabilise this stretch: cysteine 330/cysteine 371, cysteine 337/cysteine 364, cysteine 348/cysteine 806, cysteine 351/cysteine 355, and cysteine 595/cysteine 600. N-linked (GlcNAc...) asparagine glycosylation occurs at asparagine 361. The helical transmembrane segment at 376-396 threads the bilayer; it reads FGTLVFAVFMGVWVTLFLEFW. Residues 397–455 lie on the Cytoplasmic side of the membrane; it reads KRRQAELEYEWDTVELQQEEQARPEYEARCTHVVINEITQEEERIPFTAWGKCIRITLC. A helical membrane pass occupies residues 456-476; it reads ASAVFFWILLIIASVIGIIVY. The Extracellular portion of the chain corresponds to 477-509; that stretch reads RLSVFIVFSAKLPKNINGTDPIQKYLTPQTATS. Asparagine 493 carries N-linked (GlcNAc...) asparagine glycosylation. A helical transmembrane segment spans residues 510–530; the sequence is ITASIISFIIIMILNTIYEKV. The Cytoplasmic segment spans residues 531 to 551; it reads AIMITNFELPRTQTDYENSLT. Residues 552–572 traverse the membrane as a helical segment; the sequence is MKMFLFQFVNYYSSCFYIAFF. Residues 573-601 lie on the Extracellular side of the membrane; it reads KGKFVGYPGDPVYWLGKYRNEECDPGGCL. The chain crosses the membrane as a helical span at residues 602–621; it reads LELTTQLTIIMGGKAIWNNI. The Cytoplasmic segment spans residues 622–663; it reads QEVLLPWIMNLIGRFHRVSGSEKITPRWEQDYHLQPMGKLGL. The Ca(2+) site is built by glutamate 623, glutamate 666, and glutamate 669. 2 helical membrane passes run 664–684 and 685–705; these read FYEY…VASF and PLAP…DAWK. Residues 706-722 are Cytoplasmic-facing; the sequence is LTTQFRRLVPEKAQDIG. A helical transmembrane segment spans residues 723–743; the sequence is AWQPIMQGIAILAVVTNAMII. Residues 744–836 are Extracellular-facing; sequence AFTSDMIPRL…YWHVIAAKLA (93 aa). 3 N-linked (GlcNAc...) asparagine glycosylation sites follow: asparagine 777, asparagine 790, and asparagine 802. Residues 837–857 traverse the membrane as a helical segment; it reads FIIVMEHVIYSVKFFISYAIP. Residues 858–910 lie on the Cytoplasmic side of the membrane; sequence DVSKRTKSKIQREKYLTQKLLHENHLKDMTKNMGVIAERMIEAVDNNLRPKSE.

It belongs to the anoctamin family. As to quaternary structure, homodimer. In terms of tissue distribution, expressed in embryonic stem cell, fetal liver, retina, chronic myologenous leukemia and intestinal cancer.

It localises to the cell membrane. It carries out the reaction a 1,2-diacyl-sn-glycero-3-phospho-L-serine(in) = a 1,2-diacyl-sn-glycero-3-phospho-L-serine(out). The catalysed reaction is a beta-D-galactosyl-(1&lt;-&gt;1')-N-acylsphing-4-enine(out) = a beta-D-galactosyl-(1&lt;-&gt;1')-N-acylsphing-4-enine(in). The enzyme catalyses a 1,2-diacyl-sn-glycero-3-phosphocholine(in) = a 1,2-diacyl-sn-glycero-3-phosphocholine(out). With respect to regulation, exhibits synergistic gating by Ca(2+) and voltage. Inhibited by some non-specific cation channel blockers such as: ruthenium red, 2-aminoethyl diphenylborinate (2APB), gadolinium and cadmium ions. Its activity is regulated as follows. (Microbial infection) Activated by SARS coronavirus-2/SARS-CoV-2 spike protein. Functionally, small-conductance calcium-activated nonselective cation (SCAN) channel which acts as a regulator of phospholipid scrambling in platelets and osteoblasts. Phospholipid scrambling results in surface exposure of phosphatidylserine which in platelets is essential to trigger the clotting system whereas in osteoblasts is essential for the deposition of hydroxyapatite during bone mineralization. Has calcium-dependent phospholipid scramblase activity; scrambles phosphatidylserine, phosphatidylcholine and galactosylceramide. Can generate outwardly rectifying chloride channel currents in airway epithelial cells and Jurkat T lymphocytes. (Microbial infection) Upon SARS coronavirus-2/SARS-CoV-2 infection, is activated by spike protein which increases the amplitude of spontaneous Ca(2+) signals and is required for spike-mediated syncytia. The protein is Anoctamin-6 of Homo sapiens (Human).